The following is a 144-amino-acid chain: Ferredoxin-thioredoxin reductase catalytic chain, chloroplastic (144 aa).

The transit peptide at 1–31 (MTTQASTFAVAVPSVATPFRRHRNPFVVRAQ) directs the protein to the chloroplast. Cys-83 lines the [4Fe-4S] cluster pocket. The active-site Nucleophile is the Cys-85. Cys-85 and Cys-115 are disulfide-bonded. Residues Cys-102, Cys-104, and Cys-113 each contribute to the [4Fe-4S] cluster site.

Belongs to the ferredoxin thioredoxin reductase beta subunit family. Heterodimer of subunit A (variable subunit) and subunit B (catalytic subunit). Heterodimeric FTR forms a complex with ferredoxin and thioredoxin. It depends on [4Fe-4S] cluster as a cofactor.

It is found in the plastid. Its subcellular location is the chloroplast. The catalysed reaction is [thioredoxin]-disulfide + 2 reduced [2Fe-2S]-[ferredoxin] + 2 H(+) = [thioredoxin]-dithiol + 2 oxidized [2Fe-2S]-[ferredoxin]. Catalytic subunit of the ferredoxin-thioredoxin reductase (FTR), which catalyzes the two-electron reduction of thioredoxins by the electrons provided by reduced ferredoxin. The protein is Ferredoxin-thioredoxin reductase catalytic chain, chloroplastic (FTRC) of Glycine max (Soybean).